Here is a 162-residue protein sequence, read N- to C-terminus: Probable chemoreceptor glutamine deamidase CheD (162 aa).

The protein belongs to the CheD family.

It catalyses the reaction L-glutaminyl-[protein] + H2O = L-glutamyl-[protein] + NH4(+). In terms of biological role, probably deamidates glutamine residues to glutamate on methyl-accepting chemotaxis receptors (MCPs), playing an important role in chemotaxis. The polypeptide is Probable chemoreceptor glutamine deamidase CheD (Clostridium botulinum (strain Alaska E43 / Type E3)).